The following is a 344-amino-acid chain: tRNA-specific 2-thiouridylase MnmA (344 aa).

Residues 9 to 16 (AMSGGVDS) and methionine 34 contribute to the ATP site. Cysteine 92 (nucleophile) is an active-site residue. Cysteine 92 and cysteine 188 are disulfide-bonded. Position 116 (glycine 116) interacts with ATP. The interaction with tRNA stretch occupies residues 138–140 (KDQ). Residue cysteine 188 is the Cysteine persulfide intermediate of the active site.

This sequence belongs to the MnmA/TRMU family.

The protein localises to the cytoplasm. It carries out the reaction S-sulfanyl-L-cysteinyl-[protein] + uridine(34) in tRNA + AH2 + ATP = 2-thiouridine(34) in tRNA + L-cysteinyl-[protein] + A + AMP + diphosphate + H(+). Catalyzes the 2-thiolation of uridine at the wobble position (U34) of tRNA, leading to the formation of s(2)U34. The protein is tRNA-specific 2-thiouridylase MnmA of Desulfotalea psychrophila (strain LSv54 / DSM 12343).